Consider the following 437-residue polypeptide: UDP-N-acetylmuramate--L-alanine ligase (437 aa).

Residue 108–114 (GAHGKTS) participates in ATP binding.

It belongs to the MurCDEF family.

The protein resides in the cytoplasm. The catalysed reaction is UDP-N-acetyl-alpha-D-muramate + L-alanine + ATP = UDP-N-acetyl-alpha-D-muramoyl-L-alanine + ADP + phosphate + H(+). It functions in the pathway cell wall biogenesis; peptidoglycan biosynthesis. Its function is as follows. Cell wall formation. This Staphylococcus saprophyticus subsp. saprophyticus (strain ATCC 15305 / DSM 20229 / NCIMB 8711 / NCTC 7292 / S-41) protein is UDP-N-acetylmuramate--L-alanine ligase.